A 625-amino-acid polypeptide reads, in one-letter code: Probable potassium transport system protein Kup 2 (625 aa).

12 consecutive transmembrane segments (helical) span residues 15–35 (LSFA…LYAF), 52–72 (ILSL…LVIV), 98–118 (GGWL…DGML), 134–154 (LSPN…FFLF), 164–184 (IGVY…ILGF), 212–232 (LALF…ALFA), 246–266 (WFAV…ALVL), 284–304 (FLPV…QAII), 336–356 (VYLP…VVIF), 365–385 (AYGI…GIIA), 394–414 (FKIL…AGNI), and 417–437 (LLTG…VMYT).

Belongs to the HAK/KUP transporter (TC 2.A.72) family.

It localises to the cell inner membrane. The catalysed reaction is K(+)(in) + H(+)(in) = K(+)(out) + H(+)(out). Transport of potassium into the cell. Likely operates as a K(+):H(+) symporter. In Legionella pneumophila (strain Corby), this protein is Probable potassium transport system protein Kup 2.